The primary structure comprises 107 residues: Apolipoprotein E (107 aa).

A run of 5 repeats spans residues 11–32, 33–54, 55–76, 77–98, and 99–107. A 5 X 22 AA approximate tandem repeats region spans residues 11 to 107; the sequence is ALMDETMKEL…LRDVDDLQKR (97 aa). Methionine sulfoxide is present on Met74. Ser78 carries the post-translational modification Phosphoserine. Residues 89-99 are LDL and other lipoprotein receptors binding; that stretch reads HLRKLRKRLLR. 93 to 96 contributes to the heparin binding site; it reads LRKR.

The protein belongs to the apolipoprotein A1/A4/E family. As to quaternary structure, homotetramer. May interact with ABCA1; functionally associated with ABCA1 in the biogenesis of HDLs. May interact with APP/A4 amyloid-beta peptide; the interaction is extremely stable in vitro but its physiological significance is unclear. May interact with MAPT. May interact with MAP2. In the cerebrospinal fluid, interacts with secreted SORL1. Interacts with PMEL; this allows the loading of PMEL luminal fragment on ILVs to induce fibril nucleation. APOE exists as multiple glycosylated and sialylated glycoforms within cells and in plasma. The extent of glycosylation and sialylation are tissue and context specific. Post-translationally, glycated in plasma VLDL. In terms of processing, phosphorylated by FAM20C in the extracellular medium.

The protein localises to the secreted. It is found in the extracellular space. The protein resides in the extracellular matrix. Its subcellular location is the extracellular vesicle. It localises to the endosome. The protein localises to the multivesicular body. In terms of biological role, APOE is an apolipoprotein, a protein associating with lipid particles, that mainly functions in lipoprotein-mediated lipid transport between organs via the plasma and interstitial fluids. APOE is a core component of plasma lipoproteins and is involved in their production, conversion and clearance. Apolipoproteins are amphipathic molecules that interact both with lipids of the lipoprotein particle core and the aqueous environment of the plasma. As such, APOE associates with chylomicrons, chylomicron remnants, very low density lipoproteins (VLDL) and intermediate density lipoproteins (IDL) but shows a preferential binding to high-density lipoproteins (HDL). It also binds a wide range of cellular receptors including the LDL receptor/LDLR, the LDL receptor-related proteins LRP1, LRP2 and LRP8 and the very low-density lipoprotein receptor/VLDLR that mediate the cellular uptake of the APOE-containing lipoprotein particles. Finally, APOE also has a heparin-binding activity and binds heparan-sulfate proteoglycans on the surface of cells, a property that supports the capture and the receptor-mediated uptake of APOE-containing lipoproteins by cells. A main function of APOE is to mediate lipoprotein clearance through the uptake of chylomicrons, VLDLs, and HDLs by hepatocytes. APOE is also involved in the biosynthesis by the liver of VLDLs as well as their uptake by peripheral tissues ensuring the delivery of triglycerides and energy storage in muscle, heart and adipose tissues. By participating in the lipoprotein-mediated distribution of lipids among tissues, APOE plays a critical role in plasma and tissues lipid homeostasis. APOE is also involved in two steps of reverse cholesterol transport, the HDLs-mediated transport of cholesterol from peripheral tissues to the liver, and thereby plays an important role in cholesterol homeostasis. First, it is functionally associated with ABCA1 in the biogenesis of HDLs in tissues. Second, it is enriched in circulating HDLs and mediates their uptake by hepatocytes. APOE also plays an important role in lipid transport in the central nervous system, regulating neuron survival and sprouting. This Saimiri sciureus (Common squirrel monkey) protein is Apolipoprotein E (APOE).